Reading from the N-terminus, the 183-residue chain is Translocon-associated protein subunit beta (183 aa).

The N-terminal stretch at 1–17 is a signal peptide; it reads MRLLSFVVLALFAVTQA. At 18–149 the chain is on the lumenal side; sequence EEGARLLASK…DRRFSPHFLD (132 aa). Asn88 and Asn104 each carry an N-linked (GlcNAc...) asparagine glycan. A helical membrane pass occupies residues 150 to 169; the sequence is WAAFGVMTLPSIGIPLLLWY. Residues 170-183 are Cytoplasmic-facing; it reads SSKRKYDTPKTKKN.

This sequence belongs to the TRAP-beta family. As to quaternary structure, heterotetramer of TRAP-alpha, TRAP-beta, TRAP-delta and TRAP-gamma. Interacts with STING1.

Its subcellular location is the endoplasmic reticulum membrane. Functionally, TRAP proteins are part of a complex whose function is to bind calcium to the ER membrane and thereby regulate the retention of ER resident proteins. This Homo sapiens (Human) protein is Translocon-associated protein subunit beta (SSR2).